The chain runs to 428 residues: Dihydroorotase (428 aa).

Positions 56 and 58 each coordinate Zn(2+). Substrate-binding positions include histidine 58 to arginine 60 and asparagine 90. Aspartate 150, histidine 177, and histidine 230 together coordinate Zn(2+). Position 276 (asparagine 276) interacts with substrate. A Zn(2+)-binding site is contributed by aspartate 303. The active site involves aspartate 303. Histidine 307 lines the substrate pocket.

The protein belongs to the metallo-dependent hydrolases superfamily. DHOase family. Class I DHOase subfamily. Zn(2+) is required as a cofactor.

The enzyme catalyses (S)-dihydroorotate + H2O = N-carbamoyl-L-aspartate + H(+). It functions in the pathway pyrimidine metabolism; UMP biosynthesis via de novo pathway; (S)-dihydroorotate from bicarbonate: step 3/3. Functionally, catalyzes the reversible cyclization of carbamoyl aspartate to dihydroorotate. The protein is Dihydroorotase of Streptomyces coelicolor (strain ATCC BAA-471 / A3(2) / M145).